Consider the following 566-residue polypeptide: Chromatin assembly factor 1 subunit B (566 aa).

6 WD repeats span residues 11–54, 64–103, 127–166, 169–208, 228–279, and 351–392; these read HNKE…DGKA, RHTK…ELEP, GHLE…KVSI, EHKS…VAFN, FHDD…RPMG, and IHYH…IPLK. 2 disordered regions span residues 411–481 and 501–566; these read KSQP…NQPR and IPLK…KPNK. Polar residues-rich tracts occupy residues 425 to 437 and 469 to 478; these read TEGT…TLQP and QPASQSTKVN.

It belongs to the WD repeat HIR1 family. In terms of assembly, interacts with CHAF1A.

It localises to the nucleus. Acts as a component of the histone chaperone complex chromatin assembly factor 1 (CAF-1), which assembles histone octamers onto DNA during replication and repair. CAF-1 performs the first step of the nucleosome assembly process, bringing newly synthesized histones H3 and H4 to replicating DNA; histones H2A/H2B can bind to this chromatin precursor subsequent to DNA replication to complete the histone octamer. This is Chromatin assembly factor 1 subunit B (CHAF1B) from Gallus gallus (Chicken).